The primary structure comprises 391 residues: 8-amino-7-oxononanoate synthase 1 (391 aa).

108–109 serves as a coordination point for pyridoxal 5'-phosphate; sequence GF. Histidine 133 lines the substrate pocket. Pyridoxal 5'-phosphate is bound by residues serine 180, 205–208, and 236–239; these read DDAH and TLSK. Lysine 239 is modified (N6-(pyridoxal phosphate)lysine). Residue threonine 353 participates in substrate binding.

It belongs to the class-II pyridoxal-phosphate-dependent aminotransferase family. BioF subfamily. As to quaternary structure, homodimer. Requires pyridoxal 5'-phosphate as cofactor.

It catalyses the reaction 6-carboxyhexanoyl-[ACP] + L-alanine + H(+) = (8S)-8-amino-7-oxononanoate + holo-[ACP] + CO2. The protein operates within cofactor biosynthesis; biotin biosynthesis. In terms of biological role, catalyzes the decarboxylative condensation of pimeloyl-[acyl-carrier protein] and L-alanine to produce 8-amino-7-oxononanoate (AON), [acyl-carrier protein], and carbon dioxide. The protein is 8-amino-7-oxononanoate synthase 1 of Bacillus velezensis (strain DSM 23117 / BGSC 10A6 / LMG 26770 / FZB42) (Bacillus amyloliquefaciens subsp. plantarum).